Reading from the N-terminus, the 348-residue chain is Guanosine ABC transporter permease protein NupP (348 aa).

9 helical membrane-spanning segments follow: residues 8 to 28, 61 to 81, 85 to 105, 107 to 127, 136 to 156, 189 to 209, 237 to 257, 277 to 297, and 320 to 340; these read LLVP…IMLV, YILS…NIGV, LLVG…PAYI, LPLA…IPGI, EVIV…YIIS, LHLG…IINK, IMTS…MEGL, IAVA…ACLL, and IVIA…FVMG.

Belongs to the binding-protein-dependent transport system permease family. The complex is composed of two ATP-binding proteins (NupO), two transmembrane proteins (NupP and NupQ) and a solute-binding protein (NupN).

The protein localises to the cell membrane. In terms of biological role, part of an ABC transporter complex involved in the uptake of guanosine. Responsible for the translocation of the substrate across the membrane. May be a nucleoside transporter of broad specificity but with various affinities for different substrates. The sequence is that of Guanosine ABC transporter permease protein NupP from Bacillus subtilis (strain 168).